We begin with the raw amino-acid sequence, 720 residues long: Cyclopenase penL (720 aa).

Positions 137, 141, and 313 each coordinate Cu cation.

Belongs to the tyrosinase family. The cofactor is Cu(2+).

It carries out the reaction (-)-cyclopenine = viridicatin + methyl isocyanate + H(+). The enzyme catalyses (-)-4'-methoxycyclopenine = 4'-methoxyviridicatin + methyl isocyanate + H(+). It participates in secondary metabolite biosynthesis. The protein operates within alkaloid biosynthesis. It functions in the pathway mycotoxin biosynthesis. In terms of biological role, cyclopenase; part of the gene cluster that mediates the biosynthesis of penigequinolones, potent insecticidal alkaloids that contain a highly modified 10-carbon prenyl group. The first stage is catalyzed by the nonribosomal peptide synthetase penN that condenses anthranilic acid and O-methyl-L-tyrosine to produce 4'-methoxycyclopeptin. 4'-methoxycyclopeptin is then converted to 4'-methoxydehydrocyclopeptin by the ketoglutarate-dependent dioxygenase penM through dehydrogenation to form a double bond between C-alpha and C-beta of the O-methyltyrosine side chain. PenM also converts its first product methoxydehydrocyclopeptin to 4'-methoxycyclopenin. The following conversion of 4'methoxycyclopenin into 4'-methoxyviridicatin is catalyzed by the cyclopenase penL. 4'-methoxyviridicatin is the precursor of quinolone natural products, and is further converted to quinolinone B. The prenyltransferase penI then catalyzes the canonical Friedel-Crafts alkylation of quinolinone B with dimethylallyl cation to yield dimethylallyl quinolone, which is subjected to FAD-dependent dehydrogenation by the FAD-linked oxidoreductase penH to yield conjugated aryl diene. The delta(3') double bond then serves as the site of the second alkylation with DMAPP catalyzed by the prenyltransferase penG to yield a carbenium ion intermediate, which can be attacked by H(2)O to yield a styrenyl quinolone containing a C3'-hydroxyprenyl chain, or undergo cyclization to yield yaequinolones J1 and J2. The conversion of the styrenyl quinolone into the tetrahydrofuran-containing yaequinolone C is performed by the FAD-dependent monooxygenase penE and involves epoxidation of the terminal C7'-C8' olefin, followed by epoxide ring opening initiated by the C3' hydroxyl group. The predicted cysteine hydrolase penJ acts as an epoxide hydrolase that enhances the rate of the 5-exo-tet cyclization step, increasing the yield of yaequinolone C. PenF catalyzes the cationic rearrangement of the epoxide formed by penE (before ring opening to produce yaequinolone C) into yaequinolone D. Finally, the short-chain dehydrogenase/reductase (SDR)-like reductase penD, catalyzes both the dehydration of yaequinolone D and the reduction of the resulting oxonium to yield penigequinolone. The sequence is that of Cyclopenase penL from Penicillium thymicola.